The sequence spans 111 residues: UPF0060 membrane protein NFA_36830 (111 aa).

Helical transmembrane passes span 7-27 (LVLF…VWQG), 33-53 (GLWW…VATF), 62-82 (VLAA…VLVD), and 91-111 (LLGA…PRGG).

Belongs to the UPF0060 family.

The protein localises to the cell membrane. In Nocardia farcinica (strain IFM 10152), this protein is UPF0060 membrane protein NFA_36830.